The primary structure comprises 236 residues: Orotidine 5'-phosphate decarboxylase (236 aa).

Residues aspartate 17, lysine 39, 66–75, threonine 125, arginine 186, glutamine 195, glycine 215, and arginine 216 contribute to the substrate site; that span reads DLKFHDIPNT. Lysine 68 (proton donor) is an active-site residue.

It belongs to the OMP decarboxylase family. Type 1 subfamily. As to quaternary structure, homodimer.

It carries out the reaction orotidine 5'-phosphate + H(+) = UMP + CO2. It functions in the pathway pyrimidine metabolism; UMP biosynthesis via de novo pathway; UMP from orotate: step 2/2. Its function is as follows. Catalyzes the decarboxylation of orotidine 5'-monophosphate (OMP) to uridine 5'-monophosphate (UMP). The chain is Orotidine 5'-phosphate decarboxylase from Buchnera aphidicola subsp. Acyrthosiphon pisum (strain 5A).